Reading from the N-terminus, the 617-residue chain is Probable Xaa-Pro aminopeptidase P (617 aa).

The Mn(2+) site is built by Asp-414, Asp-425, Glu-523, and Glu-537.

The protein belongs to the peptidase M24B family. Mn(2+) is required as a cofactor.

The catalysed reaction is Release of any N-terminal amino acid, including proline, that is linked to proline, even from a dipeptide or tripeptide.. In terms of biological role, catalyzes the removal of a penultimate prolyl residue from the N-termini of peptides. This Colletotrichum graminicola (strain M1.001 / M2 / FGSC 10212) (Maize anthracnose fungus) protein is Probable Xaa-Pro aminopeptidase P (AMPP).